Reading from the N-terminus, the 602-residue chain is Probable beta-glucosidase btgE (602 aa).

Positions 1-18 (MRGAFLAAAAAVAGTAMA) are cleaved as a signal peptide. Disordered stretches follow at residues 61 to 94 (PPTL…SVVT) and 116 to 166 (GVDA…TSFS). Residues 74–94 (PSSSSSSEVPSVPSSESSVVT) are compositionally biased toward low complexity. A compositionally biased stretch (polar residues) spans 152–166 (TSESPLPTPGVTSFS). The active-site Proton donor is the Glu443. Glu538 acts as the Nucleophile in catalysis.

It belongs to the glycosyl hydrolase 17 family.

It is found in the secreted. The protein resides in the cell wall. It catalyses the reaction Hydrolysis of terminal, non-reducing beta-D-glucosyl residues with release of beta-D-glucose.. The protein operates within glycan metabolism; cellulose degradation. In terms of biological role, beta-glucosidases are one of a number of cellulolytic enzymes involved in the degradation of cellulosic biomass. Catalyzes the last step releasing glucose from the inhibitory cellobiose. The sequence is that of Probable beta-glucosidase btgE (btgE) from Aspergillus flavus (strain ATCC 200026 / FGSC A1120 / IAM 13836 / NRRL 3357 / JCM 12722 / SRRC 167).